Reading from the N-terminus, the 418-residue chain is Dual-specificity RNA methyltransferase RlmN (418 aa).

Residues 1-21 form a disordered region; that stretch reads MADTSLMPIPGQVDPVPAPRD. Glutamate 122 functions as the Proton acceptor in the catalytic mechanism. In terms of domain architecture, Radical SAM core spans 128-383; it reads DADRGTLCVS…APVRTPRGRD (256 aa). A disulfide bond links cysteine 135 and cysteine 388. [4Fe-4S] cluster contacts are provided by cysteine 142, cysteine 146, and cysteine 149. Residues 212 to 213, serine 244, 266 to 268, and asparagine 345 contribute to the S-adenosyl-L-methionine site; these read GE and SLH. Cysteine 388 functions as the S-methylcysteine intermediate in the catalytic mechanism. Positions 393-418 are disordered; that stretch reads TAAQKKSRAERDREAAAEAEAAASQA. Basic and acidic residues predominate over residues 399 to 408; the sequence is SRAERDREAA.

Belongs to the radical SAM superfamily. RlmN family. The cofactor is [4Fe-4S] cluster.

The protein localises to the cytoplasm. It carries out the reaction adenosine(2503) in 23S rRNA + 2 reduced [2Fe-2S]-[ferredoxin] + 2 S-adenosyl-L-methionine = 2-methyladenosine(2503) in 23S rRNA + 5'-deoxyadenosine + L-methionine + 2 oxidized [2Fe-2S]-[ferredoxin] + S-adenosyl-L-homocysteine. The catalysed reaction is adenosine(37) in tRNA + 2 reduced [2Fe-2S]-[ferredoxin] + 2 S-adenosyl-L-methionine = 2-methyladenosine(37) in tRNA + 5'-deoxyadenosine + L-methionine + 2 oxidized [2Fe-2S]-[ferredoxin] + S-adenosyl-L-homocysteine. Its function is as follows. Specifically methylates position 2 of adenine 2503 in 23S rRNA and position 2 of adenine 37 in tRNAs. m2A2503 modification seems to play a crucial role in the proofreading step occurring at the peptidyl transferase center and thus would serve to optimize ribosomal fidelity. This is Dual-specificity RNA methyltransferase RlmN from Erythrobacter litoralis (strain HTCC2594).